A 142-amino-acid polypeptide reads, in one-letter code: Universal stress protein C (142 aa).

The protein belongs to the universal stress protein A family.

The protein localises to the cytoplasm. In terms of biological role, required for resistance to DNA-damaging agents. This Escherichia coli (strain K12) protein is Universal stress protein C (uspC).